We begin with the raw amino-acid sequence, 182 residues long: Glutamyl-tRNA(Gln) amidotransferase subunit F, mitochondrial (182 aa).

Belongs to the GatF family. As to quaternary structure, subunit of the heterotrimeric GatFAB amidotransferase (AdT) complex, composed of A, B and F subunits.

Its subcellular location is the mitochondrion inner membrane. It catalyses the reaction L-glutamyl-tRNA(Gln) + L-glutamine + ATP + H2O = L-glutaminyl-tRNA(Gln) + L-glutamate + ADP + phosphate + H(+). Functionally, allows the formation of correctly charged Gln-tRNA(Gln) through the transamidation of misacylated Glu-tRNA(Gln) in the mitochondria. The reaction takes place in the presence of glutamine and ATP through an activated gamma-phospho-Glu-tRNA(Gln). Required for proper protein synthesis within the mitochondrion. The sequence is that of Glutamyl-tRNA(Gln) amidotransferase subunit F, mitochondrial from Candida tropicalis (strain ATCC MYA-3404 / T1) (Yeast).